Reading from the N-terminus, the 374-residue chain is Histidinol-phosphate aminotransferase 2 (374 aa).

Lys227 is subject to N6-(pyridoxal phosphate)lysine.

This sequence belongs to the class-II pyridoxal-phosphate-dependent aminotransferase family. Histidinol-phosphate aminotransferase subfamily. In terms of assembly, homodimer. It depends on pyridoxal 5'-phosphate as a cofactor.

It carries out the reaction L-histidinol phosphate + 2-oxoglutarate = 3-(imidazol-4-yl)-2-oxopropyl phosphate + L-glutamate. Its pathway is amino-acid biosynthesis; L-histidine biosynthesis; L-histidine from 5-phospho-alpha-D-ribose 1-diphosphate: step 7/9. This chain is Histidinol-phosphate aminotransferase 2 (hisC2), found in Ralstonia nicotianae (strain ATCC BAA-1114 / GMI1000) (Ralstonia solanacearum).